Here is a 1162-residue protein sequence, read N- to C-terminus: Glycerophosphocholine phosphodiesterase GDE1 (1162 aa).

In terms of domain architecture, SPX spans 1–155; sequence MKFGKTYVTH…TSILSQHSGV (155 aa). ANK repeat units follow at residues 346 to 375, 392 to 421, 423 to 452, 458 to 487, 492 to 521, and 525 to 554; these read YHRT…KWGL, EGLT…AQTL, CPNL…DVNY, RNET…NTEI, FGWT…SYDI, and SGWL…KLLL. Residues 817 to 1146 form the GP-PDE domain; sequence TRVIGHRGLG…DSVLAVREGL (330 aa).

It belongs to the GDE1 family.

Its subcellular location is the cytoplasm. It catalyses the reaction sn-glycerol 3-phosphocholine + H2O = sn-glycerol 3-phosphate + choline + H(+). In terms of biological role, glycerophosphocholine glycerophosphodiesterase responsible for the hydrolysis of intracellular glycerophosphocholine into glycerol-phosphate and choline. The choline is used for phosphatidyl-choline synthesis. Required for utilization of glycerophosphocholine as phosphate source. C.albicans can utilize GroPCho through transport and intracellular hydrolysis or through extracellular hydrolysis. The sequence is that of Glycerophosphocholine phosphodiesterase GDE1 from Candida albicans (strain SC5314 / ATCC MYA-2876) (Yeast).